A 352-amino-acid chain; its full sequence is Phosphoribosylformylglycinamidine cyclo-ligase (352 aa).

The protein belongs to the AIR synthase family.

It is found in the cytoplasm. It carries out the reaction 2-formamido-N(1)-(5-O-phospho-beta-D-ribosyl)acetamidine + ATP = 5-amino-1-(5-phospho-beta-D-ribosyl)imidazole + ADP + phosphate + H(+). The protein operates within purine metabolism; IMP biosynthesis via de novo pathway; 5-amino-1-(5-phospho-D-ribosyl)imidazole from N(2)-formyl-N(1)-(5-phospho-D-ribosyl)glycinamide: step 2/2. The polypeptide is Phosphoribosylformylglycinamidine cyclo-ligase (Pseudomonas fluorescens (strain ATCC BAA-477 / NRRL B-23932 / Pf-5)).